A 320-amino-acid chain; its full sequence is Polycomb complex protein BMI-1-A (320 aa).

The RING-type zinc finger occupies 18 to 57 (CVLCGGYFIDATTIIECLHSFCKMCIVRYLETSKYCPICD). The Nuclear localization signal motif lies at 81–95 (KLVPGLFKNEMKRRR). The segment at 234–320 (ITHPQEGLNN…ALNGSSTSSG (87 aa)) is disordered. Residues 262–281 (VPSTSSPLPSPSTLVQPSQP) show a composition bias toward low complexity. The span at 285 to 304 (HISSPINGTTMTSPNRQFNF) shows a compositional bias: polar residues.

In terms of assembly, component of a PRC1-like complex. Homodimer. Interacts with cbx2.

The protein localises to the nucleus. Functionally, component of a Polycomb group (PcG) multiprotein PRC1-like complex, a complex class required to maintain the transcriptionally repressive state of many genes, including Hox genes, throughout development. PcG PRC1 complex acts via chromatin remodeling and modification of histones; it mediates monoubiquitination of histone H2A 'Lys-119', rendering chromatin heritably changed in its expressibility. In the PRC1 complex, it is required to stimulate the E3 ubiquitin-protein ligase activity of rnf2. This Danio rerio (Zebrafish) protein is Polycomb complex protein BMI-1-A (bmi1a).